We begin with the raw amino-acid sequence, 122 residues long: Large ribosomal subunit protein bL12 (122 aa).

The protein belongs to the bacterial ribosomal protein bL12 family. Homodimer. Part of the ribosomal stalk of the 50S ribosomal subunit. Forms a multimeric L10(L12)X complex, where L10 forms an elongated spine to which 2 to 4 L12 dimers bind in a sequential fashion. Binds GTP-bound translation factors.

Its function is as follows. Forms part of the ribosomal stalk which helps the ribosome interact with GTP-bound translation factors. Is thus essential for accurate translation. In Borrelia hermsii (strain HS1 / DAH), this protein is Large ribosomal subunit protein bL12.